The following is a 1191-amino-acid chain: Homeodomain-interacting protein kinase 3 (1191 aa).

K27 is covalently cross-linked (Glycyl lysine isopeptide (Lys-Gly) (interchain with G-Cter in SUMO2)). The Protein kinase domain maps to 197–525 (YEVLDFLGRG…PIETLNHPFV (329 aa)). Residues 203 to 211 (LGRGTFGQV) and K226 contribute to the ATP site. Catalysis depends on D322, which acts as the Proton acceptor. A Phosphotyrosine modification is found at Y359. The tract at residues 766-920 (QNRSNSLQNT…NSMSDDEQES (155 aa)) is interaction with AR. Residues 774-867 (NTNVPHSAFI…SPRPSLRECK (94 aa)) are interaction with FAS. The segment at 801–828 (TQDNHTSEGEARTCHEASVRQDSSVSDK) is disordered. A compositionally biased stretch (basic and acidic residues) spans 802–828 (QDNHTSEGEARTCHEASVRQDSSVSDK). Positions 846-856 (ITISSDTDDEE) are interaction with UBL1. Residues 888–905 (SSPDSTLSTSSSGQSSPS) are compositionally biased toward low complexity. Disordered regions lie at residues 888–960 (SSPD…TCAG) and 993–1022 (TCQP…KPTS). Over residues 1008–1022 (NQPSASAARQQKPTS) the composition is skewed to polar residues.

It belongs to the protein kinase superfamily. CMGC Ser/Thr protein kinase family. HIPK subfamily. Interacts with Nkx1-2. Interacts with FAS and DAXX. Probably part of a complex consisting of HIPK3, FAS and FADD. Interacts with UBL1/SUMO-1. Interacts with and stabilizes ligand-bound androgen receptor (AR). Autophosphorylated. Autophosphorylation is not required for catalytic activity. In terms of processing, may be sumoylated.

It is found in the nucleus. The catalysed reaction is L-seryl-[protein] + ATP = O-phospho-L-seryl-[protein] + ADP + H(+). The enzyme catalyses L-threonyl-[protein] + ATP = O-phospho-L-threonyl-[protein] + ADP + H(+). Functionally, seems to negatively regulate apoptosis by promoting FADD phosphorylation. Enhances androgen receptor-mediated transcription. May act as a transcriptional corepressor for NK homeodomain transcription factors. This is Homeodomain-interacting protein kinase 3 (Hipk3) from Rattus norvegicus (Rat).